The primary structure comprises 230 residues: MDNKIIVALDYETENEALNFIDQVDPSLCRLKVGKEMFTTLGAHFVKQLHDRKFDVFLDLKYHDIPNTVARAVRSAADLGVWMVDLHASGGLTMMEEAKKILEPYGKDAPLLIAVTVLTSMEDLDLLQIGINASPMEQVIRLSHLAKRAGLDGVVCSPQEVEVLRTHCGDDFKLVTPGIRPAGSDFGDQRRVMTPKQAIQTGADFLVIGRPITQAQEPLSILKAINASIA.

Substrate is bound by residues D10, K32, 59–68 (DLKYHDIPNT), T119, R180, Q189, G209, and R210. The Proton donor role is filled by K61.

This sequence belongs to the OMP decarboxylase family. Type 1 subfamily. As to quaternary structure, homodimer.

The enzyme catalyses orotidine 5'-phosphate + H(+) = UMP + CO2. The protein operates within pyrimidine metabolism; UMP biosynthesis via de novo pathway; UMP from orotate: step 2/2. In terms of biological role, catalyzes the decarboxylation of orotidine 5'-monophosphate (OMP) to uridine 5'-monophosphate (UMP). The chain is Orotidine 5'-phosphate decarboxylase from Haemophilus ducreyi (strain 35000HP / ATCC 700724).